The following is a 927-amino-acid chain: Protein unc-45 homolog B (927 aa).

3 TPR repeats span residues 4 to 37 (PVQL…ITDK), 41 to 74 (AVLY…DASD), and 76 to 108 (KALF…EPKN). ARM repeat units follow at residues 167 to 206 (DAGA…GMCT), 209 to 248 (RARA…NIVD), and 746 to 785 (DKLR…NLAL).

In terms of tissue distribution, detected initially throughout the somites and the heart and gradually also expressed in the jaw, branchial arches and body wall muscles at later embryonic stages.

Its subcellular location is the cytoplasm. It is found in the myofibril. It localises to the sarcomere. The protein localises to the z line. The protein resides in the a band. Its subcellular location is the perinuclear region. It is found in the cytosol. Its function is as follows. Acts as a co-chaperone for HSP90 and is required for proper folding of the myosin motor domain. Plays a role in sarcomere formation during muscle cell development. Is necessary for normal early lens development. The protein is Protein unc-45 homolog B of Xenopus tropicalis (Western clawed frog).